The sequence spans 1475 residues: Nuclear pore complex protein Nup153 (1475 aa).

Gly residues predominate over residues 1–15; that stretch reads MASGAGGVGGGGGGK. Disordered regions lie at residues 1–37, 90–124, and 171–225; these read MASGAGGVGGGGGGKIRTRRCHQGPIKPYQQGRQQHQ, DEESSNITDGRITPEPAVSNTEEPSTTSTASNYPD, and DSTS…TATS. An N-acetylalanine modification is found at alanine 2. Threonine 102 carries the phosphothreonine modification. Composition is skewed to polar residues over residues 107–121 and 181–190; these read VSNTEEPSTTSTASN and ISTTSGFSSR. Serine 182, serine 185, serine 192, serine 203, and serine 209 each carry phosphoserine. Copy 1 of the repeat occupies 236 to 237; that stretch reads FG. A 29 X 2 AA repeats of F-G region spans residues 236–1418; sequence FGTLSPSLGN…NSPSGVFTFG (1183 aa). Serine 240, serine 257, serine 297, serine 320, serine 330, serine 333, serine 334, serine 338, and serine 343 each carry phosphoserine. Residue lysine 353 forms a Glycyl lysine isopeptide (Lys-Gly) (interchain with G-Cter in SUMO2) linkage. Threonine 369 is modified (phosphothreonine). Lysine 384 carries the N6-acetyllysine modification. A Phosphothreonine modification is found at threonine 388. Phosphoserine is present on residues serine 500, serine 516, serine 518, serine 522, and serine 529. Residues serine 534 and serine 544 are each glycosylated (O-linked (GlcNAc) serine). Phosphothreonine is present on threonine 588. Phosphoserine is present on residues serine 607, serine 614, serine 619, and serine 633. Repeat 2 spans residues 652-653; it reads FG. The segment at 657–687 adopts a RanBP2-type 1 zinc-finger fold; that stretch reads KAGSSWQCDTCLLQNKVTDNKCIACQAAKLS. The Zn(2+) site is built by cysteine 664, cysteine 667, cysteine 678, and cysteine 681. Serine 687 carries the post-translational modification Phosphoserine. Residues 715–716 form repeat 3; that stretch reads FG. Lysine 718 is modified (N6-acetyllysine). The segment at 722–751 adopts a RanBP2-type 2 zinc-finger fold; sequence VIGTWDCDTCLVQNKPEAIKCVACETPKPG. Positions 728, 731, 742, and 745 each coordinate Zn(2+). The stretch at 786 to 787 is repeat 4; it reads FG. RanBP2-type zinc fingers lie at residues 793–822 and 851–880; these read PIGSWECSVCCVSNNAEDNKCVSCMSEKPG and PEGSWDCELCLVQNKADSTKCLACESAKPG. Zn(2+) is bound by residues cysteine 799, cysteine 802, cysteine 813, cysteine 816, cysteine 857, cysteine 860, cysteine 871, and cysteine 874. Serine 891 is modified (phosphoserine). Repeat 5 spans residues 905–906; the sequence is FG. Residues serine 908 and serine 909 are each glycosylated (O-linked (GlcNAc) serine). Copy 6 of the repeat occupies 926–927; sequence FG. The residue at position 954 (lysine 954) is an N6-acetyllysine. 5 consecutive repeat copies span residues 961 to 962, 983 to 984, 1000 to 1001, 1024 to 1025, and 1084 to 1085. A glycan (O-linked (GlcNAc) serine) is linked at serine 1113. 2 tandem repeats follow at residues 1118–1119 and 1135–1136. The tract at residues 1128–1167 is disordered; it reads KCQPVFSFGNSEQTKDENSSKSTFSFSMTKPSEKESEQPA. Low complexity predominate over residues 1147 to 1157; the sequence is SKSTFSFSMTK. Threonine 1156 carries O-linked (GlcNAc) threonine glycosylation. 11 consecutive repeat copies span residues 1173–1174, 1212–1213, 1228–1229, 1240–1241, 1275–1276, 1289–1290, 1291–1292, 1306–1307, 1319–1320, 1327–1328, and 1341–1342. Positions 1311-1402 are disordered; that stretch reads SAPSASPAFG…SAFQFGSSTT (92 aa). Polar residues predominate over residues 1321-1335; sequence ANQTPTFGQSQGASQ. Composition is skewed to polar residues over residues 1343-1356 and 1363-1396; these read SISSSTALFPTGSQ and GTVSSSSQPPVFGQQPSQSAFGSGTTPNSSSAFQ. The tract at residues 1350–1475 is (Microbial infection) Interacts with HIV-1 capsid protein p24 (CA); it reads LFPTGSQPAP…KIKTAVRRRK (126 aa). 5 tandem repeats follow at residues 1362-1363, 1374-1375, 1383-1384, 1397-1398, and 1417-1418. Polar residues-rich tracts occupy residues 1420–1431 and 1438–1463; these read NSSTPAASAQPS and FNQSPAAFTVGSNGKNVFSSSGTSFS. The disordered stretch occupies residues 1420–1475; that stretch reads NSSTPAASAQPSGSGGFPFNQSPAAFTVGSNGKNVFSSSGTSFSGRKIKTAVRRRK. Residues serine 1457, serine 1461, and serine 1463 each carry the phosphoserine modification. Residues 1465–1475 are compositionally biased toward basic residues; that stretch reads RKIKTAVRRRK.

Belongs to the NUP153 family. As to quaternary structure, part of the nuclear pore complex (NPC). Interacts with TPR (via coiled coil region); the interaction is direct and provides a link between the core structure and the TPR-containing nuclear basket of the nuclear pore complex (NPC). Interacts with HIKESHI. Interacts with SENP2. Interacts with XPO5. Interacts with RAN; the interaction occurs in a GTP- and GDP-independent manner. Interacts with MCM3AP isoform GANP; this interaction is required for GANP localization at the nuclear pore complex. Interacts with MAPK1. In terms of assembly, (Microbial infection) Interacts (via C-terminus) with HIV-1 capsid protein p24 (CA) (via N-terminus). (Microbial infection) Interacts with HIV-1 integrase; this interaction might play a role in nuclear import of HIV pre-integration complex. As to quaternary structure, (Microbial infection) Interacts with hepatitis B virus capsid protein; this interaction probably plays a role in nuclear import of HBV genome. In terms of assembly, (Microbial infection) Interacts with Epstein-barr virus BGLF4; this interaction allows BGLF4 nuclear entry. (Microbial infection) Interacts with HIV-2 virus protein vpx; this interaction might promote vpx nuclear entry. Requires Zn(2+) as cofactor. In terms of processing, phosphorylated in interphase, hyperphosphorylated during mitosis. May play a role in the reversible disassembly of the nuclear pore complex during mitosis. Post-translationally, proteolytically degraded after poliovirus (PV) infection; degradation is partial and NCP- and TPR-binding domains withstand degradation. O-glycosylated during cytokinesis at sites identical or close to phosphorylation sites, this interferes with the phosphorylation status.

It localises to the nucleus. Its subcellular location is the nucleus membrane. The protein localises to the nuclear pore complex. Its function is as follows. Component of the nuclear pore complex (NPC), a complex required for the trafficking across the nuclear envelope. Functions as a scaffolding element in the nuclear phase of the NPC essential for normal nucleocytoplasmic transport of proteins and mRNAs. Involved in the quality control and retention of unspliced mRNAs in the nucleus; in association with TPR, regulates the nuclear export of unspliced mRNA species bearing constitutive transport element (CTE) in a NXF1- and KHDRBS1-independent manner. Mediates TPR anchoring to the nuclear membrane at NPC. The repeat-containing domain may be involved in anchoring other components of the NPC to the pore membrane. Possible DNA-binding subunit of the nuclear pore complex (NPC). Functionally, (Microbial infection) Interacts with HIV-1 caspid protein P24 and thereby promotes the integration of the virus in the nucleus of non-dividing cells (in vitro). (Microbial infection) Binds HIV-2 protein vpx and thereby promotes the nuclear translocation of the lentiviral genome (in vitro). This chain is Nuclear pore complex protein Nup153 (NUP153), found in Homo sapiens (Human).